Reading from the N-terminus, the 88-residue chain is Small ribosomal subunit protein bS20 (88 aa).

The disordered stretch occupies residues 1 to 25; sequence MANSAQARKRVRQNNTRRQHAASQR. The segment covering 7–20 has biased composition (basic residues); it reads ARKRVRQNNTRRQH.

This sequence belongs to the bacterial ribosomal protein bS20 family.

Its function is as follows. Binds directly to 16S ribosomal RNA. The protein is Small ribosomal subunit protein bS20 of Psychrobacter sp. (strain PRwf-1).